Reading from the N-terminus, the 269-residue chain is Imidazoleglycerol-phosphate dehydratase 3, chloroplastic (269 aa).

A chloroplast-targeting transit peptide spans 1-51; it reads MTTAPVVSPSLSRLHSAPASPFPKAPVGSGAGVAFPARPYGPSLRLRSAVM. Residues Glu83, 109 to 117, 135 to 139, Arg161, and Arg183 each bind substrate; these read HMLDQLASH and HHSNE. His109, His135, His136, and Glu139 together coordinate Mn(2+). Positions 207, 231, 232, and 235 each coordinate Mn(2+). Residues 231 to 239 and 261 to 263 each bind substrate; these read HHIIEATFK and SSK.

It belongs to the imidazoleglycerol-phosphate dehydratase family. The cofactor is Mn(2+).

The protein resides in the plastid. It localises to the chloroplast. It catalyses the reaction D-erythro-1-(imidazol-4-yl)glycerol 3-phosphate = 3-(imidazol-4-yl)-2-oxopropyl phosphate + H2O. Its pathway is amino-acid biosynthesis; L-histidine biosynthesis; L-histidine from 5-phospho-alpha-D-ribose 1-diphosphate: step 6/9. The polypeptide is Imidazoleglycerol-phosphate dehydratase 3, chloroplastic (Triticum aestivum (Wheat)).